The chain runs to 185 residues: Large ribosomal subunit protein uL5 (185 aa).

Belongs to the universal ribosomal protein uL5 family. As to quaternary structure, part of the 50S ribosomal subunit; part of the 5S rRNA/L5/L18/L25 subcomplex. Contacts the 5S rRNA and the P site tRNA. Forms a bridge to the 30S subunit in the 70S ribosome.

This is one of the proteins that bind and probably mediate the attachment of the 5S RNA into the large ribosomal subunit, where it forms part of the central protuberance. In the 70S ribosome it contacts protein S13 of the 30S subunit (bridge B1b), connecting the 2 subunits; this bridge is implicated in subunit movement. Contacts the P site tRNA; the 5S rRNA and some of its associated proteins might help stabilize positioning of ribosome-bound tRNAs. In Xanthobacter autotrophicus (strain ATCC BAA-1158 / Py2), this protein is Large ribosomal subunit protein uL5.